The primary structure comprises 267 residues: 2-keto-3-deoxy-L-rhamnonate aldolase (267 aa).

Residue His-49 is the Proton acceptor of the active site. Substrate is bound at residue Gln-151. Glu-153 contributes to the Mg(2+) binding site. 2 residues coordinate substrate: Ala-178 and Asp-179. Asp-179 contributes to the Mg(2+) binding site.

Belongs to the HpcH/HpaI aldolase family. KDR aldolase subfamily. As to quaternary structure, homohexamer. Mg(2+) is required as a cofactor.

The enzyme catalyses 2-dehydro-3-deoxy-L-rhamnonate = (S)-lactaldehyde + pyruvate. In terms of biological role, catalyzes the reversible retro-aldol cleavage of 2-keto-3-deoxy-L-rhamnonate (KDR) to pyruvate and lactaldehyde. This chain is 2-keto-3-deoxy-L-rhamnonate aldolase, found in Klebsiella pneumoniae subsp. pneumoniae (strain ATCC 700721 / MGH 78578).